The sequence spans 340 residues: Myomesin-1 (340 aa).

Positions 177 to 212 are disordered; sequence AEKARLKSRPSAPXTGQIIVTEEEPSEEAGTENXQR. Positions 197-206 are enriched in acidic residues; that stretch reads TEEEPSEEAG.

As to quaternary structure, homodimer. Interacts with TTN/titin and PNKD. Seems to be expressed in all cardiac and skeletal fibers.

The protein resides in the cytoplasm. The protein localises to the myofibril. It is found in the sarcomere. Its subcellular location is the m line. Its function is as follows. Major component of the vertebrate myofibrillar M band. Binds myosin, titin, and light meromyosin. This binding is dose dependent. The chain is Myomesin-1 (MYOM1) from Bos taurus (Bovine).